A 202-amino-acid chain; its full sequence is ER membrane protein complex subunit 7 homolog (202 aa).

The first 23 residues, 1-23 (MAPIFRSTSLIAFSLFFFFFAST), serve as a signal peptide directing secretion. The chain crosses the membrane as a helical span at residues 148 to 168 (IVKSPMGLMVGFMVVVVFLMP). Positions 179 to 202 (MKSAQEQMRSQGVPSLTSLLPASR) are disordered. Positions 182-202 (AQEQMRSQGVPSLTSLLPASR) are enriched in polar residues.

It belongs to the EMC7 family.

It localises to the membrane. This Arabidopsis thaliana (Mouse-ear cress) protein is ER membrane protein complex subunit 7 homolog.